The primary structure comprises 305 residues: Ornithine carbamoyltransferase (305 aa).

Carbamoyl phosphate contacts are provided by residues 50–53 (STRT), Q77, R101, and 128–131 (HPCQ). L-ornithine-binding positions include N162, D220, and 224-225 (SM). Carbamoyl phosphate is bound by residues 260–261 (CL) and R288.

Belongs to the aspartate/ornithine carbamoyltransferase superfamily. OTCase family.

Its subcellular location is the cytoplasm. It catalyses the reaction carbamoyl phosphate + L-ornithine = L-citrulline + phosphate + H(+). The protein operates within amino-acid degradation; L-arginine degradation via ADI pathway; carbamoyl phosphate from L-arginine: step 2/2. Reversibly catalyzes the transfer of the carbamoyl group from carbamoyl phosphate (CP) to the N(epsilon) atom of ornithine (ORN) to produce L-citrulline. The chain is Ornithine carbamoyltransferase from Akkermansia muciniphila (strain ATCC BAA-835 / DSM 22959 / JCM 33894 / BCRC 81048 / CCUG 64013 / CIP 107961 / Muc).